A 146-amino-acid chain; its full sequence is D-aminoacyl-tRNA deacylase (146 aa).

Residues 137-138 (GP) carry the Gly-cisPro motif, important for rejection of L-amino acids motif.

It belongs to the DTD family. In terms of assembly, homodimer.

It localises to the cytoplasm. The enzyme catalyses glycyl-tRNA(Ala) + H2O = tRNA(Ala) + glycine + H(+). It catalyses the reaction a D-aminoacyl-tRNA + H2O = a tRNA + a D-alpha-amino acid + H(+). Its function is as follows. An aminoacyl-tRNA editing enzyme that deacylates mischarged D-aminoacyl-tRNAs. Also deacylates mischarged glycyl-tRNA(Ala), protecting cells against glycine mischarging by AlaRS. Acts via tRNA-based rather than protein-based catalysis; rejects L-amino acids rather than detecting D-amino acids in the active site. By recycling D-aminoacyl-tRNA to D-amino acids and free tRNA molecules, this enzyme counteracts the toxicity associated with the formation of D-aminoacyl-tRNA entities in vivo and helps enforce protein L-homochirality. The protein is D-aminoacyl-tRNA deacylase of Desulfatibacillum aliphaticivorans.